We begin with the raw amino-acid sequence, 316 residues long: Na(+)/H(+) exchange regulatory cofactor NHE-RF2 (316 aa).

The PDZ 1 domain maps to 11–91 (LCRLVRGEQG…ETRLLVVDKE (81 aa)). Positions 109 to 148 (QRGLPPAHDPWEPKPDWARAGSLSSDAGQKDVNGPPRELR) are disordered. S130, S183, and S254 each carry phosphoserine. Residues 151–231 (LCHLRKGPQG…EARLLLVDPE (81 aa)) enclose the PDZ 2 domain. The tract at residues 244 to 303 (TEEHVEGPLPSPITNGTSPAQDASAWKRDPFQESGLHLSPTAAEAKEKARATRVNKRAPQ) is disordered. The segment covering 255 to 264 (PITNGTSPAQ) has biased composition (polar residues). At S282 the chain carries Phosphoserine.

As to quaternary structure, homodimer, and heterodimer with NHERF1. Binds ADRB2, SLC9A3, P2RY1, P2YR2, SRY, RDX, PDZK1 and LPAR2. Found in a complex with EZR, PODXL and NHERF2. Interacts (via the PDZ domains) with PODXL (via the C-terminal PDZ-binding motif DTHL); interaction is detected in glomerular epithelium cells. Binds PODXL. Interacts with SGK1 and KCNJ1/ROMK1. Interacts (via the PDZ domains) with SLC26A6. In terms of tissue distribution, detected in kidney glomeruli.

The protein localises to the endomembrane system. Its subcellular location is the nucleus. The protein resides in the apical cell membrane. Scaffold protein that connects plasma membrane proteins with members of the ezrin/moesin/radixin family and thereby helps to link them to the actin cytoskeleton and to regulate their surface expression. Necessary for cAMP-mediated phosphorylation and inhibition of SLC9A3. May also act as scaffold protein in the nucleus. This Oryctolagus cuniculus (Rabbit) protein is Na(+)/H(+) exchange regulatory cofactor NHE-RF2 (NHERF2).